The chain runs to 197 residues: 3-isopropylmalate dehydratase small subunit (197 aa).

Belongs to the LeuD family. LeuD type 1 subfamily. As to quaternary structure, heterodimer of LeuC and LeuD.

The catalysed reaction is (2R,3S)-3-isopropylmalate = (2S)-2-isopropylmalate. Its pathway is amino-acid biosynthesis; L-leucine biosynthesis; L-leucine from 3-methyl-2-oxobutanoate: step 2/4. Catalyzes the isomerization between 2-isopropylmalate and 3-isopropylmalate, via the formation of 2-isopropylmaleate. The chain is 3-isopropylmalate dehydratase small subunit from Shouchella clausii (strain KSM-K16) (Alkalihalobacillus clausii).